The primary structure comprises 366 residues: Alanine racemase (366 aa).

Lysine 40 acts as the Proton acceptor; specific for D-alanine in catalysis. At lysine 40 the chain carries N6-(pyridoxal phosphate)lysine. Arginine 136 provides a ligand contact to substrate. Residue tyrosine 263 is the Proton acceptor; specific for L-alanine of the active site. Methionine 310 contacts substrate.

The protein belongs to the alanine racemase family. Requires pyridoxal 5'-phosphate as cofactor.

It carries out the reaction L-alanine = D-alanine. It participates in amino-acid biosynthesis; D-alanine biosynthesis; D-alanine from L-alanine: step 1/1. Its function is as follows. Catalyzes the interconversion of L-alanine and D-alanine. May also act on other amino acids. The sequence is that of Alanine racemase (alr) from Streptococcus pyogenes serotype M12 (strain MGAS2096).